The chain runs to 904 residues: Nitrate reductase [NADH] 1 (904 aa).

2 stretches are compositionally biased toward polar residues: residues 1 to 10 and 39 to 50; these read MAASVENRQF and STNFQKKPNSTI. Residues 1-65 are disordered; that stretch reads MAASVENRQF…SSEDDDDDDE (65 aa). Positions 56–65 are enriched in acidic residues; that stretch reads SSEDDDDDDE. Cys183 is a binding site for Mo-molybdopterin. Residues 531 to 606 enclose the Cytochrome b5 heme-binding domain; sequence SKMYSMSEVR…LEEFRIGELL (76 aa). Positions 566 and 589 each coordinate heme. Positions 647–759 constitute an FAD-binding FR-type domain; the sequence is REKIPCKLID…KGPLGHIEYQ (113 aa). FAD is bound by residues 699–702, 716–720, Phe721, Phe728, 733–735, and Thr786; these read RAYT, VVKIY, and QMS.

Belongs to the nitrate reductase family. Homodimer. Requires FAD as cofactor. Heme is required as a cofactor. Mo-molybdopterin serves as cofactor.

It catalyses the reaction nitrite + NAD(+) + H2O = nitrate + NADH + H(+). Its activity is regulated as follows. Regulated by the nitrogen source and controlled by the circadian rhythm. Nitrate reductase is a key enzyme involved in the first step of nitrate assimilation in plants, fungi and bacteria. In Nicotiana tabacum (Common tobacco), this protein is Nitrate reductase [NADH] 1 (NIA1).